The following is a 225-amino-acid chain: Peptidyl-tRNA hydrolase (225 aa).

Tyrosine 14 serves as a coordination point for tRNA. The active-site Proton acceptor is histidine 19. TRNA is bound by residues phenylalanine 64, asparagine 66, and asparagine 112. Positions 187-225 (MQPPKPEKPKGEAKPAAPEAPEAAPDTRSALQRLADRFR) are disordered. Positions 200–210 (KPAAPEAPEAA) are enriched in low complexity.

It belongs to the PTH family. Monomer.

It is found in the cytoplasm. It carries out the reaction an N-acyl-L-alpha-aminoacyl-tRNA + H2O = an N-acyl-L-amino acid + a tRNA + H(+). Functionally, hydrolyzes ribosome-free peptidyl-tRNAs (with 1 or more amino acids incorporated), which drop off the ribosome during protein synthesis, or as a result of ribosome stalling. Catalyzes the release of premature peptidyl moieties from peptidyl-tRNA molecules trapped in stalled 50S ribosomal subunits, and thus maintains levels of free tRNAs and 50S ribosomes. The sequence is that of Peptidyl-tRNA hydrolase from Cereibacter sphaeroides (strain ATCC 17025 / ATH 2.4.3) (Rhodobacter sphaeroides).